A 338-amino-acid chain; its full sequence is L-serine dehydratase (338 aa).

Lys-39 is modified (N6-(pyridoxal phosphate)lysine).

The protein belongs to the serine/threonine dehydratase family. Pyridoxal 5'-phosphate serves as cofactor.

Its subcellular location is the cytoplasm. It carries out the reaction L-serine = pyruvate + NH4(+). The protein operates within carbohydrate biosynthesis; gluconeogenesis. The chain is L-serine dehydratase (SDL1) from Saccharomyces cerevisiae (strain AWRI1631) (Baker's yeast).